Consider the following 303-residue polypeptide: Protoheme IX farnesyltransferase (303 aa).

8 consecutive transmembrane segments (helical) span residues 25-45 (MGLV…AIVL), 54-74 (IPQI…ACAL), 104-124 (LLIL…ILNI), 125-145 (PSGV…SIWS), 151-171 (WNTV…WTAI), 179-199 (AIAL…ALAI), 228-248 (VWLI…PVFI), and 280-300 (FVYS…ISLI).

Belongs to the UbiA prenyltransferase family. Protoheme IX farnesyltransferase subfamily. As to quaternary structure, interacts with CtaA.

The protein localises to the cell membrane. It catalyses the reaction heme b + (2E,6E)-farnesyl diphosphate + H2O = Fe(II)-heme o + diphosphate. Its pathway is porphyrin-containing compound metabolism; heme O biosynthesis; heme O from protoheme: step 1/1. In terms of biological role, converts heme B (protoheme IX) to heme O by substitution of the vinyl group on carbon 2 of heme B porphyrin ring with a hydroxyethyl farnesyl side group. The protein is Protoheme IX farnesyltransferase of Staphylococcus carnosus (strain TM300).